The chain runs to 219 residues: UPF0073 inner membrane protein YqfA (219 aa).

Topologically, residues 1 to 23 are cytoplasmic; that stretch reads MVQKPLIKQGYSLAEEIANSVSH. Residues 24 to 44 traverse the membrane as a helical segment; sequence GIGLVFGIVGLVLLLVQAVDL. Over 45–53 the chain is Periplasmic; the sequence is NASATAITS. A helical membrane pass occupies residues 54-74; that stretch reads YSLYGGSMILLFLASTLYHAI. Topologically, residues 75–90 are cytoplasmic; that stretch reads PHQRAKMWLKKFDHCA. The helical transmembrane segment at 91–111 threads the bilayer; the sequence is IYLLIAGTYTPFLLVGLDSPL. Topologically, residues 112–113 are periplasmic; sequence AR. Residues 114 to 134 form a helical membrane-spanning segment; it reads GLMIVIWSLALLGILFKLTIA. The Cytoplasmic portion of the chain corresponds to 135–138; that stretch reads HRFK. A helical membrane pass occupies residues 139–159; it reads ILSLVTYLAMGWLSLVVIYEM. Topologically, residues 160–165 are periplasmic; that stretch reads AVKLAA. A helical membrane pass occupies residues 166 to 186; sequence GSVTLLAVGGVVYSLGVIFYV. Residues 187-195 lie on the Cytoplasmic side of the membrane; it reads CKRIPYNHA. The helical transmembrane segment at 196–216 threads the bilayer; that stretch reads IWHGFVLGGSVCHFLAIYLYI. Over 217-219 the chain is Periplasmic; that stretch reads GQA.

Belongs to the UPF0073 (Hly-III) family.

The protein localises to the cell inner membrane. The sequence is that of UPF0073 inner membrane protein YqfA (yqfA) from Escherichia coli O157:H7.